A 316-amino-acid chain; its full sequence is Acetyl-coenzyme A carboxylase carboxyl transferase subunit alpha (316 aa).

The CoA carboxyltransferase C-terminal domain occupies 39 to 293 (KLEEKNAQLT…KKHLQANLTN (255 aa)).

This sequence belongs to the AccA family. Acetyl-CoA carboxylase is a heterohexamer composed of biotin carboxyl carrier protein (AccB), biotin carboxylase (AccC) and two subunits each of ACCase subunit alpha (AccA) and ACCase subunit beta (AccD).

Its subcellular location is the cytoplasm. The enzyme catalyses N(6)-carboxybiotinyl-L-lysyl-[protein] + acetyl-CoA = N(6)-biotinyl-L-lysyl-[protein] + malonyl-CoA. The protein operates within lipid metabolism; malonyl-CoA biosynthesis; malonyl-CoA from acetyl-CoA: step 1/1. Functionally, component of the acetyl coenzyme A carboxylase (ACC) complex. First, biotin carboxylase catalyzes the carboxylation of biotin on its carrier protein (BCCP) and then the CO(2) group is transferred by the carboxyltransferase to acetyl-CoA to form malonyl-CoA. The sequence is that of Acetyl-coenzyme A carboxylase carboxyl transferase subunit alpha from Coxiella burnetii (strain RSA 331 / Henzerling II).